A 336-amino-acid polypeptide reads, in one-letter code: N-acetylornithine carbamoyltransferase (336 aa).

Residues 49–52 (SMRT), Trp77, and Arg112 each bind carbamoyl phosphate. Glu144 provides a ligand contact to N(2)-acetyl-L-ornithine. Carbamoyl phosphate is bound at residue 148 to 151 (HPCQ). Lys252 and Leu295 together coordinate N(2)-acetyl-L-ornithine. A carbamoyl phosphate-binding site is contributed by 294-295 (CL). Position 302 is an N6-carboxylysine (Lys302). Arg322 is a binding site for carbamoyl phosphate.

It belongs to the aspartate/ornithine carbamoyltransferase superfamily. AOTCase family. As to quaternary structure, homotrimer.

Its subcellular location is the cytoplasm. The catalysed reaction is N(2)-acetyl-L-ornithine + carbamoyl phosphate = N(2)-acetyl-L-citrulline + phosphate + H(+). Its pathway is amino-acid biosynthesis; L-arginine biosynthesis. Carboxylation at Lys-302 increases the catalytic activity of the enzyme. Functionally, catalyzes the transfer of the carbamoyl group from carbamoyl phosphate to the delta-amino group of N(2)-acetyl-L-ornithine to produce N(2)-acetyl-L-citrulline. This is a step in an alternative arginine biosynthesis pathway. The enzyme has no activity with ornithine. The chain is N-acetylornithine carbamoyltransferase from Xylella fastidiosa (strain 9a5c).